A 187-amino-acid chain; its full sequence is Peptide deformylase (187 aa).

Positions 94 and 136 each coordinate Fe cation. Residue glutamate 137 is part of the active site. A Fe cation-binding site is contributed by histidine 140.

Belongs to the polypeptide deformylase family. Fe(2+) is required as a cofactor.

It carries out the reaction N-terminal N-formyl-L-methionyl-[peptide] + H2O = N-terminal L-methionyl-[peptide] + formate. In terms of biological role, removes the formyl group from the N-terminal Met of newly synthesized proteins. Requires at least a dipeptide for an efficient rate of reaction. N-terminal L-methionine is a prerequisite for activity but the enzyme has broad specificity at other positions. The sequence is that of Peptide deformylase from Chlorobaculum tepidum (strain ATCC 49652 / DSM 12025 / NBRC 103806 / TLS) (Chlorobium tepidum).